The chain runs to 320 residues: Acetyl-coenzyme A carboxylase carboxyl transferase subunit alpha (320 aa).

Residues 42–295 enclose the CoA carboxyltransferase C-terminal domain; the sequence is IGDKAAQALK…GDAIAEAFND (254 aa).

Belongs to the AccA family. Acetyl-CoA carboxylase is a heterohexamer composed of biotin carboxyl carrier protein (AccB), biotin carboxylase (AccC) and two subunits each of ACCase subunit alpha (AccA) and ACCase subunit beta (AccD).

It localises to the cytoplasm. The enzyme catalyses N(6)-carboxybiotinyl-L-lysyl-[protein] + acetyl-CoA = N(6)-biotinyl-L-lysyl-[protein] + malonyl-CoA. It functions in the pathway lipid metabolism; malonyl-CoA biosynthesis; malonyl-CoA from acetyl-CoA: step 1/1. In terms of biological role, component of the acetyl coenzyme A carboxylase (ACC) complex. First, biotin carboxylase catalyzes the carboxylation of biotin on its carrier protein (BCCP) and then the CO(2) group is transferred by the carboxyltransferase to acetyl-CoA to form malonyl-CoA. The sequence is that of Acetyl-coenzyme A carboxylase carboxyl transferase subunit alpha from Nitrobacter hamburgensis (strain DSM 10229 / NCIMB 13809 / X14).